The primary structure comprises 170 residues: Putative calmodulin-like protein 6 (170 aa).

4 consecutive EF-hand domains span residues 8-43, 44-79, 84-119, and 120-155; these read QQIS…LGMA, PSQE…KLYE, DDEE…LGEE, and MTED…TWNI. The Ca(2+) site is built by Asp21, Asn23, Asp25, Cys27, Glu32, Asp57, Asp59, Asn61, Thr63, Glu68, Asp97, Asp99, Asn101, Glu108, Asp133, Asn135, Asp137, Gln139, and Glu144.

It belongs to the calmodulin family.

Functionally, potential calcium sensor. This Oryza sativa subsp. japonica (Rice) protein is Putative calmodulin-like protein 6 (CML6).